We begin with the raw amino-acid sequence, 816 residues long: Leucine--tRNA ligase (816 aa).

The 'HIGH' region motif lies at 42-52; sequence PYPSGSLHMGH. The 'KMSKS' region signature appears at 574 to 578; that stretch reads KMSKS. Lys-577 contributes to the ATP binding site.

This sequence belongs to the class-I aminoacyl-tRNA synthetase family.

It is found in the cytoplasm. It catalyses the reaction tRNA(Leu) + L-leucine + ATP = L-leucyl-tRNA(Leu) + AMP + diphosphate. This is Leucine--tRNA ligase from Ruthia magnifica subsp. Calyptogena magnifica.